Reading from the N-terminus, the 304-residue chain is dTDP-4-dehydrorhamnose reductase (304 aa).

NADH is bound by residues 16–18 (GML), 42–43 (DI), and 66–68 (AWT). NADPH contacts are provided by residues 17–18 (ML), 42–43 (DI), and 66–68 (AWT). 107–108 (TD) contributes to the dTDP-beta-L-rhamnose binding site. The NADH site is built by Tyr131 and Lys135. Tyr131 and Lys135 together coordinate NADPH. Residue Tyr131 is the Proton donor/acceptor of the active site. Position 157 (Trp157) interacts with dTDP-beta-L-rhamnose.

This sequence belongs to the dTDP-4-dehydrorhamnose reductase family. As to quaternary structure, homodimer. Mg(2+) serves as cofactor.

It carries out the reaction dTDP-beta-L-rhamnose + NADP(+) = dTDP-4-dehydro-beta-L-rhamnose + NADPH + H(+). It functions in the pathway carbohydrate biosynthesis; dTDP-L-rhamnose biosynthesis. Its pathway is antibiotic biosynthesis; streptomycin biosynthesis. Its function is as follows. Involved in the biosynthesis of the streptose moiety of streptomycin. Catalyzes the reduction of dTDP-6-deoxy-L-lyxo-4-hexulose to yield dTDP-L-rhamnose. RmlD uses NADH and NADPH nearly equally well. The polypeptide is dTDP-4-dehydrorhamnose reductase (Streptomyces griseus).